The sequence spans 421 residues: F-box only protein 5 (421 aa).

A Phosphoserine modification is found at Ser-85. The interaction with EVI5 stretch occupies residues 114–219 (ELEASRLYED…IGKKMGLEHL (106 aa)). The F-box domain occupies 223 to 273 (AELSRRGFVHLLANILTKLSGMDLVNLSKVSRIWKKILENNKGAFQLYSKT). Residues 236–313 (NILTKLSGMD…KSSTWAPPKK (78 aa)) form a sufficient for interaction with RPS6KA2; Prevents association of CDC20 with RPS6KA2 region. Positions 236–383 (NILTKLSGMD…SCQFEYCTKC (148 aa)) are requires for efficient binding to CDC20. Positions 280-421 (SSKLSLHATT…KKSKKNLQRL (142 aa)) are inhibits APC ubiquitin ligase activity. Positions 296 to 299 (RAAL) are competitively blocks access of APC substrates to the D-box coreceptor formed by FZR1 and ANAPC10. A ZBR-type zinc finger spans residues 348-396 (SLKACVRCNFPAKYDHYLERAVCKRESCQFEYCTKCLCAYHNNKDCLNG). Positions 352, 355, 370, 375, 380, 383, 388, and 393 each coordinate Zn(2+). Residues 352–394 (CVRCNFPAKYDHYLERAVCKRESCQFEYCTKCLCAYHNNKDCL) are allows a rapid multiple mono-ubiquitination of the APC substrate, but strongly inhibits the slow ubiquitin chain elongation catalyzed by UBCH10. Positions 411–421 (TKKSKKNLQRL) are sufficient to suppress UBE2S activity; essential for interaction with UBE2S; competitively inhibits the rapide ubiquitin chain elongation by UBE2D1 which blocks UBE2D1 with APC; indispensable for recruitment and position of FBXO5 to the catalytic site of APC; abrogates the inhibition of ubiquitin chain assembly primarily catalyzed by UBE2S; inhibits the ubiquitination by either UBE2C or UBE2D1.

As to quaternary structure, part of a SCF (SKP1-cullin-F-box) protein ligase complex. Interacts with BTRC; mediates proteolysis by the SCF ubiquitin ligase complex leading to activation of APC in late mitosis and subsequent mitotic progression. Interacts with FZR1/CDH1 and the N-terminal substrate-binding domain of CDC20; prevents APC activation. Also interacts with EVI5 which blocks its phosphorylation by PLK1 and prevents its subsequent binding to BTRC and degradation. Interacts simultaneously with anaphase promoting complex (APC), through at least ANAPC2, CDC23, CDC27, the APC substrate GMNN and the APC activator FZR1. Interacts with UBE2S; interferes with the activity of UBE2S mainly by disrupting the dynamic electrostatic association between the C-terminal tail of UBE2S and ANAPC2. Interacts with RPS6KA2; cooperates to induce the metaphase arrest of early blastomeres; increases and stabilizes interaction of FBXO5 with CDC20. Phosphorylation by CDK2 and subsequently by PLK1 triggers degradation during early mitosis through ubiquitin-mediated proteolysis by the SCF ubiquitin ligase complex containing the F-box protein BTRC. This degradation is necessary for the activation of APC in late mitosis and subsequent mitotic progression. Phosphorylated by RPS6KA2; increases and stabilizes interaction with CDC20. In terms of processing, ubiquitinated by the SCF(BTRC) complex following phosphorylation by PLK1. Undergoes both 'Lys-11' and 'Lys-48'-linked polyubiquitination by APC-FZR1 complex leading to degradation during G1 phase by the proteasome. Degraded through the SCF(BTRC) complex; degradation occurs during oocyte maturation, between germinal vesicle breakdown (GVBD) and meiosis I, and is required for the meiosis I-meiosis II transition. Expressed in oocytes and granulosa cells. Expressed in proliferating cells compartments in hair follicle and skin epidermis, spermatogonia, and intestinal crypts.

Its subcellular location is the nucleus. It localises to the cytoplasm. It is found in the cytoskeleton. The protein localises to the spindle. It functions in the pathway protein modification; protein ubiquitination. Its function is as follows. Regulator of APC activity during mitotic and meiotic cell cycle. During mitotic cell cycle plays a role as both substrate and inhibitor of APC-FZR1 complex. During G1 phase, plays a role as substrate of APC-FZR1 complex E3 ligase. Then switches as an inhibitor of APC-FZR1 complex during S and G2 leading to cell-cycle commitment. As APC inhibitor, prevents the degradation of APC substrates at multiple levels: by interacting with APC and blocking access of APC substrates to the D-box co-receptor, formed by FZR1 and ANAPC10; by suppressing ubiquitin ligation and chain elongation by APC by preventing the UBE2C and UBE2S activities. Plays a role in genome integrity preservation by coordinating DNA replication with mitosis through APC inhibition in interphase to stabilize CCNA2 and GMNN in order to promote mitosis and prevent rereplication and DNA damage-induced cellular senescence. During oocyte maturation, plays a role in meiosis through inactivation of APC-FZR1 complex. Inhibits APC through RPS6KA2 interaction that increases FBXO5 affiniy for CDC20 leading to the metaphase arrest of the second meiotic division before fertilization. Controls entry into the first meiotic division through inactivation of APC-FZR1 complex. Promotes migration and osteogenic differentiation of mesenchymal stem cells. This is F-box only protein 5 from Mus musculus (Mouse).